The sequence spans 318 residues: NADH-ubiquinone oxidoreductase chain 1 (318 aa).

The next 8 helical transmembrane spans lie at 2–22 (FMIN…FLTL), 76–96 (TLAL…YPLI), 102–122 (LLFI…SGWA), 146–166 (LAII…STLI), 171–191 (YLWL…STLA), 217–237 (AGPF…MNAL), 253–273 (ETYT…FLWV), and 294–314 (LPLT…ASCI).

The protein belongs to the complex I subunit 1 family. In terms of assembly, core subunit of respiratory chain NADH dehydrogenase (Complex I) which is composed of 45 different subunits.

The protein resides in the mitochondrion inner membrane. The enzyme catalyses a ubiquinone + NADH + 5 H(+)(in) = a ubiquinol + NAD(+) + 4 H(+)(out). In terms of biological role, core subunit of the mitochondrial membrane respiratory chain NADH dehydrogenase (Complex I) which catalyzes electron transfer from NADH through the respiratory chain, using ubiquinone as an electron acceptor. Essential for the catalytic activity and assembly of complex I. This Lemur catta (Ring-tailed lemur) protein is NADH-ubiquinone oxidoreductase chain 1 (MT-ND1).